The following is a 1254-amino-acid chain: Zinc finger protein BRUTUS (1254 aa).

Residues 1 to 40 are disordered; the sequence is MATPLPDFETARGGGAVASSSTTVLPSSVSSSSSSSRPLP. Residues 19–40 are compositionally biased toward low complexity; sequence SSSTTVLPSSVSSSSSSSRPLP. Residues 201-221 traverse the membrane as a helical segment; that stretch reads FLCSIPVNMLAVFLPWISSSI. The segment at 893–913 is disordered; the sequence is GSPDSSSTETSKPSPQKDNDH. Residues 895–906 are compositionally biased toward polar residues; it reads PDSSSTETSKPS. The segment at 999-1068 adopts a CHY-type zinc-finger fold; that stretch reads PEKQIYGCEH…PICTTPSCDG (70 aa). Residues C1006, H1008, C1019, C1020, C1026, C1029, H1030, H1036, C1048, C1051, C1061, C1066, C1076, C1079, H1090, C1091, C1094, C1097, H1109, C1110, C1113, C1116, H1124, and C1126 each coordinate Zn(2+). The segment at 1071–1134 adopts a CTCHY-type zinc-finger fold; the sequence is MAKHYCSICK…KCLEKSLETN (64 aa). Residues 1135–1176 form an RING-type; atypical zinc finger; that stretch reads CPICCEFLFTSSEAVRALPCGHYMHSACFQAYTCSHYTCPIC.

Interacts with the PYEL proteins bHLH115, bHLH104 and ILR3 in the nucleus. Binds zinc and iron ions. Expressed in cotyledons of seedlings, young leaves, developing and mature embryos, and other reproductive tissues including floral vasculature, funiculus, septum, and gynoecium valves.

Its subcellular location is the membrane. It localises to the nucleus. Its pathway is protein modification; protein ubiquitination. Its function is as follows. Essential protein. Negatively regulates the response to iron deficiency and thus contributes to iron homeostasis. Exhibits E3 ubiquitin-protein ligase activity in vitro. Plays a role in root growth, rhizosphere acidification, and iron reductase activity in response to iron deprivation. Facilitates 26S proteasome-mediated degradation of PYEL proteins in the absence of iron. The chain is Zinc finger protein BRUTUS from Arabidopsis thaliana (Mouse-ear cress).